Here is an 851-residue protein sequence, read N- to C-terminus: Protein FAM13B (851 aa).

Residues 23–212 (IPLDELQQGG…GLLENYYEFF (190 aa)) enclose the Rho-GAP domain. Residues 556–565 (IKDAKHKNSD) are compositionally biased toward basic and acidic residues. Positions 556–611 (IKDAKHKNSDGEFAPQTRPRSNTLPKSFGSSLDHEDGESEGEPRVIQKEKTPSKEA) are disordered. Residues 573–585 (RPRSNTLPKSFGS) show a composition bias toward polar residues. Residues 596–611 (GEPRVIQKEKTPSKEA) show a composition bias toward basic and acidic residues.

This sequence belongs to the FAM13 family.

This Mus musculus (Mouse) protein is Protein FAM13B (Fam13b).